Consider the following 90-residue polypeptide: Conotoxin Ca8.2 (90 aa).

The N-terminal stretch at 1-21 is a signal peptide; sequence MMLKMGAMFVLLLLFILPSSQ. The propeptide occupies 22–46; it reads QEGDVQARKTHLKRGFYGTLAMSTR. Gln89 carries the glutamine amide modification.

This sequence belongs to the conotoxin S superfamily. Contains 5 disulfide bonds. In terms of tissue distribution, expressed by the venom duct.

The protein resides in the secreted. This is Conotoxin Ca8.2 from Conus caracteristicus (Characteristic cone).